We begin with the raw amino-acid sequence, 573 residues long: MRTENTATLNLIWGALILEELARLGVQHVCMAPGSRSTPLTLAAAQQTKLQRHLHFDERGLGFMALGLAKASRAPVAIITTSGTAVANLYPAIVEAWLTHVPLIVLSGDRPPELLGCGANQAIVQPGIFANYATQVNLPTPDAHIAPQALLTTVDEAVANQTRPVHINCMYREPLYPSELSGVILDAESPYLKPLQTWLQLARPYTQYGKSKQLSSPSDDAIMRFVHGKGVIVVGTLTPEQDPQQLIALSQKIGWPLLTDAQSQLRQHPAAIGNIDQLLQHPKARNLLQEADRVLVFGGRLLSKRVIGYLAEQNWHSYWQVLPEQDRLDPSHNAKHIWHANAEQFAALNWYRSSSANWANTLITYNDELHNLFVRNIDQGEFGEAQVIRAIANTRPLEQQLFIGNSLPVRLYDMYAPVSCCTATTYTNRGASGIDGLLATACGIAAHEGKPTSLIIGDLSQLHDLNSLAIAKGLSSPLVIVILNNDGGNIFNLLPVPNEQVRSEYYRLSHGLEFGYAAAMFNLPYNQVDNLADFQDSYNEALDFQGASIIEVNVSQNQASDQIAALNLWVKQS.

This sequence belongs to the TPP enzyme family. MenD subfamily. Homodimer. The cofactor is Mg(2+). Mn(2+) serves as cofactor. It depends on thiamine diphosphate as a cofactor.

The catalysed reaction is isochorismate + 2-oxoglutarate + H(+) = 5-enolpyruvoyl-6-hydroxy-2-succinyl-cyclohex-3-ene-1-carboxylate + CO2. Its pathway is quinol/quinone metabolism; 1,4-dihydroxy-2-naphthoate biosynthesis; 1,4-dihydroxy-2-naphthoate from chorismate: step 2/7. It functions in the pathway quinol/quinone metabolism; menaquinone biosynthesis. Its function is as follows. Catalyzes the thiamine diphosphate-dependent decarboxylation of 2-oxoglutarate and the subsequent addition of the resulting succinic semialdehyde-thiamine pyrophosphate anion to isochorismate to yield 2-succinyl-5-enolpyruvyl-6-hydroxy-3-cyclohexene-1-carboxylate (SEPHCHC). This is 2-succinyl-5-enolpyruvyl-6-hydroxy-3-cyclohexene-1-carboxylate synthase from Shewanella baltica (strain OS155 / ATCC BAA-1091).